The primary structure comprises 110 residues: UPF0060 membrane protein AHA_2410 (110 aa).

4 helical membrane passes run 8 to 28 (GLFLVTALAEILGCYLPYLWL), 33 to 53 (SVWLLLPAGLSLMLFAWLLSL), 63 to 83 (AAYGGVYIFVAILWLWLVDGI), and 87 to 107 (LWDLVGSLVALCGMAIIMFAP).

It belongs to the UPF0060 family.

The protein localises to the cell inner membrane. The protein is UPF0060 membrane protein AHA_2410 of Aeromonas hydrophila subsp. hydrophila (strain ATCC 7966 / DSM 30187 / BCRC 13018 / CCUG 14551 / JCM 1027 / KCTC 2358 / NCIMB 9240 / NCTC 8049).